Reading from the N-terminus, the 162-residue chain is NADH-quinone oxidoreductase subunit I (162 aa).

4Fe-4S ferredoxin-type domains follow at residues 54–83 (RRYE…IESE) and 93–122 (TRYD…ETQI). Positions 63, 66, 69, 73, 102, 105, 108, and 112 each coordinate [4Fe-4S] cluster.

Belongs to the complex I 23 kDa subunit family. In terms of assembly, NDH-1 is composed of 14 different subunits. Subunits NuoA, H, J, K, L, M, N constitute the membrane sector of the complex. [4Fe-4S] cluster serves as cofactor.

The protein resides in the cell inner membrane. It carries out the reaction a quinone + NADH + 5 H(+)(in) = a quinol + NAD(+) + 4 H(+)(out). In terms of biological role, NDH-1 shuttles electrons from NADH, via FMN and iron-sulfur (Fe-S) centers, to quinones in the respiratory chain. The immediate electron acceptor for the enzyme in this species is believed to be ubiquinone. Couples the redox reaction to proton translocation (for every two electrons transferred, four hydrogen ions are translocated across the cytoplasmic membrane), and thus conserves the redox energy in a proton gradient. The sequence is that of NADH-quinone oxidoreductase subunit I from Burkholderia cenocepacia (strain HI2424).